The sequence spans 832 residues: Spindle pole body component alp6 (832 aa).

An interaction with mzt1 region spans residues 1–186 (MSEIHVKTAL…STETSSVQHT (186 aa)). Thr-286 bears the Phosphothreonine mark.

Belongs to the TUBGCP family. As to quaternary structure, part of the gamma-tubulin complex. Interacts directly with mzt1. Interacts with mto1. Interacts with mto2.

It is found in the cytoplasm. The protein resides in the cytoskeleton. It localises to the microtubule organizing center. The protein localises to the spindle pole body. Functionally, component of the gamma tubule complex that is required for the regulation of both interphase microtubules and mitotic bipolar spindles. This Schizosaccharomyces pombe (strain 972 / ATCC 24843) (Fission yeast) protein is Spindle pole body component alp6 (alp6).